The primary structure comprises 248 residues: Mannose-binding protein C (248 aa).

Residues 1 to 20 (MSLFPSLPLLLLSMVAASYS) form the signal peptide. Residues 42–99 (GINGFPGKDGRDGTKGEKGEPGQGLRGLQGPPGKLGPPGNPGPSGSPGPKGQKGDPGK) enclose the Collagen-like domain. The tract at residues 43–113 (INGFPGKDGR…DSSLAASERK (71 aa)) is disordered. At proline 47 the chain carries 4-hydroxyproline. The segment covering 49-61 (KDGRDGTKGEKGE) has biased composition (basic and acidic residues). 4-hydroxyproline occurs at positions 73, 79, 82, and 88. Positions 75–87 (KLGPPGNPGPSGS) are enriched in pro residues. Residues 93 to 102 (QKGDPGKSPD) show a composition bias toward basic and acidic residues. Residues 112–130 (RKALQTEMARIKKWLTFSL) are a coiled coil. Positions 134-245 (VGNKFFLTNG…CSTSHLAVCE (112 aa)) constitute a C-type lectin domain. 2 cysteine pairs are disulfide-bonded: cysteine 155–cysteine 244 and cysteine 222–cysteine 236.

As to quaternary structure, oligomeric complex of 3 or more homotrimers. Interacts with MASP1 and MASP2. Interacts with MEP1A and MEP1B and may inhibit their catalytic activity. In terms of processing, hydroxylation on proline residues within the sequence motif, GXPG, is most likely to be 4-hydroxy as this fits the requirement for 4-hydroxylation in vertebrates.

Its subcellular location is the secreted. Calcium-dependent lectin involved in innate immune defense. Binds mannose, fucose and N-acetylglucosamine on different microorganisms and activates the lectin complement pathway. Binds to late apoptotic cells, as well as to apoptotic blebs and to necrotic cells, but not to early apoptotic cells, facilitating their uptake by macrophages. The chain is Mannose-binding protein C (MBL2) from Gorilla gorilla gorilla (Western lowland gorilla).